The sequence spans 116 residues: Large ribosomal subunit protein bL17 (116 aa).

Belongs to the bacterial ribosomal protein bL17 family. Part of the 50S ribosomal subunit. Contacts protein L32.

In Acaryochloris marina (strain MBIC 11017), this protein is Large ribosomal subunit protein bL17.